The sequence spans 442 residues: ATP-dependent protease ATPase subunit HslU (442 aa).

ATP contacts are provided by residues I18 and 60–65 (GVGKTE). The interval 133–156 (DALLPKPKNDWDNTDSDTSSNTRQ) is disordered. D255, E320, and R392 together coordinate ATP.

The protein belongs to the ClpX chaperone family. HslU subfamily. In terms of assembly, a double ring-shaped homohexamer of HslV is capped on each side by a ring-shaped HslU homohexamer. The assembly of the HslU/HslV complex is dependent on binding of ATP.

The protein resides in the cytoplasm. Functionally, ATPase subunit of a proteasome-like degradation complex; this subunit has chaperone activity. The binding of ATP and its subsequent hydrolysis by HslU are essential for unfolding of protein substrates subsequently hydrolyzed by HslV. HslU recognizes the N-terminal part of its protein substrates and unfolds these before they are guided to HslV for hydrolysis. This is ATP-dependent protease ATPase subunit HslU from Shewanella sp. (strain ANA-3).